Reading from the N-terminus, the 486-residue chain is MKNLIDFGILNLSSIAPMMVLSLFAVFILVLNFINKNISRTFWTMLAILGLAINIFFLFGYSGIVRGFFDLVLIDGFAFISMIIILLFSILFLPLTLSKENFHDCSLAEFYALYLFMIVGYEFMVSSQNLIVILVGLETSSLALYTLIALHNRTRAIEAAIKYFTMGALSTGFFCFAIVIFYLSSASLDISAISYSAKNTDSILIATACIFLICSIGFKLSLIPFHTWIPDVYEGSSEVMAGYISIVPKIAGFIVAMRVFESLYDSNIAFIQISLYIIAVLTMTLANIMALIQNDVKRMLAFSSISHAGFVLCAVVIGTKSANIGLFLYWLMFSFANLGAFSVLWFTRNKQNIWHERFDHPFEKFNGLVKFLPYTSFLMALFMISLAGIPPFSVFWGKMYLMGSAISSGFIFMAVIMAINSAIAVYYYLRIIVCMFLKEPLENAEATLYKQNSSNAIKFIITFSAILCILAPFMVKFWTDFVLKFI.

Helical transmembrane passes span 14–34 (SIAP…LNFI), 45–65 (MLAI…SGIV), 77–97 (FAFI…PLTL), 105–125 (CSLA…EFMV), 130–150 (LIVI…LIAL), 163–183 (YFTM…IFYL), 203–223 (ILIA…LSLI), 237–257 (SEVM…IVAM), 268–288 (IAFI…LANI), 299–319 (MLAF…VIGT), 326–346 (LFLY…VLWF), 377–397 (FLMA…VFWG), 409–429 (GFIF…YYYL), and 459–479 (FIIT…KFWT).

This sequence belongs to the complex I subunit 2 family. In terms of assembly, NDH-1 is composed of 14 different subunits. Subunits NuoA, H, J, K, L, M, N constitute the membrane sector of the complex.

It localises to the cell inner membrane. It catalyses the reaction a quinone + NADH + 5 H(+)(in) = a quinol + NAD(+) + 4 H(+)(out). Its function is as follows. NDH-1 shuttles electrons from NADH, via FMN and iron-sulfur (Fe-S) centers, to quinones in the respiratory chain. The immediate electron acceptor for the enzyme in this species is believed to be ubiquinone. Couples the redox reaction to proton translocation (for every two electrons transferred, four hydrogen ions are translocated across the cytoplasmic membrane), and thus conserves the redox energy in a proton gradient. In Campylobacter hominis (strain ATCC BAA-381 / DSM 21671 / CCUG 45161 / LMG 19568 / NCTC 13146 / CH001A), this protein is NADH-quinone oxidoreductase subunit N.